A 285-amino-acid polypeptide reads, in one-letter code: Transmembrane protein 53-B (285 aa).

Residues 165 to 185 (FLALAAFAIMVIILRIVLYPV) form a helical membrane-spanning segment.

The protein belongs to the TMEM53 family.

Its subcellular location is the nucleus outer membrane. In terms of biological role, ensures normal bone formation, through the negative regulation of bone morphogenetic protein (BMP) signaling in osteoblast lineage cells by blocking cytoplasm-nucleus translocation of phosphorylated SMAD proteins. The sequence is that of Transmembrane protein 53-B (tmem53-b) from Xenopus laevis (African clawed frog).